Reading from the N-terminus, the 1385-residue chain is DNA-directed RNA polymerase subunit beta'' (1385 aa).

Zn(2+) is bound by residues Cys220, Cys293, Cys300, and Cys303.

It belongs to the RNA polymerase beta' chain family. RpoC2 subfamily. As to quaternary structure, in plastids the minimal PEP RNA polymerase catalytic core is composed of four subunits: alpha, beta, beta', and beta''. When a (nuclear-encoded) sigma factor is associated with the core the holoenzyme is formed, which can initiate transcription. The cofactor is Zn(2+).

Its subcellular location is the plastid. The protein localises to the chloroplast. The catalysed reaction is RNA(n) + a ribonucleoside 5'-triphosphate = RNA(n+1) + diphosphate. Its function is as follows. DNA-dependent RNA polymerase catalyzes the transcription of DNA into RNA using the four ribonucleoside triphosphates as substrates. The sequence is that of DNA-directed RNA polymerase subunit beta'' from Aethionema cordifolium (Lebanon stonecress).